Consider the following 457-residue polypeptide: Equilibrative nucleoside transporter 1 (457 aa).

The Cytoplasmic segment spans residues 1 to 12 (MTTSHQPQDRYK). A helical membrane pass occupies residues 13–29 (AVWLIFFVLGLGTLLPW). The Extracellular segment spans residues 30 to 82 (NFFITATQYFTSRLNTSQNISLVTNQSCESTEALADPSVSLPARSSLSAIFNN). N-linked (GlcNAc...) asparagine glycosylation is found at asparagine 44, asparagine 48, and asparagine 54. Residues 83–107 (VMTLCAMLPLLIFTCLNSFLHQKVS) form a helical membrane-spanning segment. Topologically, residues 108–111 (QSLR) are cytoplasmic. A helical transmembrane segment spans residues 112 to 130 (ILGSLLAILLVFLVTATLV). Over 131 to 138 (KVQMDALS) the chain is Extracellular. Residues 139-157 (FFIITMIKIVLINSFGAIL) traverse the membrane as a helical segment. At 158-174 (QASLFGLAGVLPANYTA) the chain is on the cytoplasmic side. The helical transmembrane segment at 175–199 (PIMSGQGLAGFFTSVAMICAVASGS) threads the bilayer. The Extracellular portion of the chain corresponds to 200–206 (KLSESAF). The helical transmembrane segment at 207 to 227 (GYFITACAVVILAILCYLALP) threads the bilayer. Over 228 to 291 (WMEFYRHYLQ…IKAILKSIWV (64 aa)) the chain is Cytoplasmic. Serine 254 is subject to Phosphoserine. Residues 255–266 (EGEEPRGGREES) show a composition bias toward basic and acidic residues. The disordered stretch occupies residues 255 to 275 (EGEEPRGGREESGVPGPNSLP). A Phosphoserine modification is found at serine 273. A helical transmembrane segment spans residues 292–311 (LALSVCFIFTVTIGLFPAVT). Residues 312-323 (AEVESSIAGTSP) are Extracellular-facing. The chain crosses the membrane as a helical span at residues 324–343 (WKNCYFIPVACFLNFNVFDW). Residues 344–360 (LGRSLTAICMWPGQDSR) are Cytoplasmic-facing. Residues 361–379 (WLPVLVACRVVFIPLLMLC) form a helical membrane-spanning segment. Residues 380 to 394 (NVKQHHYLPSLFKHD) are Extracellular-facing. Residues 395–414 (VWFITFMAAFAFSNGYLASL) traverse the membrane as a helical segment. The Cytoplasmic portion of the chain corresponds to 415-432 (CMCFGPKKVKPAEAETAG). Residues 433–453 (NIMSFFLCLGLALGAVLSFLL) traverse the membrane as a helical segment. Residues 454–457 (RALV) lie on the Extracellular side of the membrane.

It belongs to the SLC29A/ENT transporter (TC 2.A.57) family. In terms of assembly, identified in a complex with STOM. Expressed in jejunum, liver and lung. Expressed in testis at the blood-testis barrier (at protein level). Expressed in ventricular myocytes (at protein level). Expressed in kidney.

The protein localises to the basolateral cell membrane. Its subcellular location is the apical cell membrane. It is found in the cell membrane. The catalysed reaction is adenosine(in) = adenosine(out). It carries out the reaction guanosine(in) = guanosine(out). The enzyme catalyses inosine(in) = inosine(out). It catalyses the reaction uridine(out) = uridine(in). The catalysed reaction is thymidine(in) = thymidine(out). It carries out the reaction cytidine(in) = cytidine(out). The enzyme catalyses adenine(out) = adenine(in). It catalyses the reaction guanine(out) = guanine(in). The catalysed reaction is thymine(out) = thymine(in). It carries out the reaction uracil(in) = uracil(out). The enzyme catalyses hypoxanthine(out) = hypoxanthine(in). Transport activity is sensitive to low concentrations of the inhibitor nitrobenzylmercaptopurine riboside (NBMPR). Its function is as follows. Uniporter involved in the facilitative transport of nucleosides and nucleobases, and contributes to maintaining their cellular homeostasis. Functions as a Na(+)-independent transporter. Involved in the transport of nucleosides such as adenosine, thymidine and uridine. Also transports purine nucleobases (hypoxanthine, adenine, guanine) and pyrimidine nucleobases (thymine, uracil). Mediates basolateral nucleoside uptake into Sertoli cells, thereby regulating the transport of nucleosides in testis across the blood-testis barrier. Regulates inosine levels in brown adipocytes tissues (BAT) and extracellular inosine levels, which controls BAT-dependent energy expenditure. This Rattus norvegicus (Rat) protein is Equilibrative nucleoside transporter 1.